The sequence spans 1130 residues: 3-hydroxy-3-methylglutaryl-coenzyme A reductase 1 (1130 aa).

Topologically, residues 1-46 (MATSLITRKLRSAEATNDVEPGWLKRQVTGVLQSISSHACQHPIHT) are cytoplasmic. A helical transmembrane segment spans residues 47 to 67 (IVVIALLASTTYVGLLEGSLF). The Lumenal portion of the chain corresponds to 68–242 (DSVRNSRNIA…DLIKHAETID (175 aa)). Asparagine 148 carries N-linked (GlcNAc...) asparagine glycosylation. The SSD domain occupies 242 to 415 (DIVIMTLGYL…FTFYTTILCI (174 aa)). Residues 243–263 (IVIMTLGYLSMHLSFVSLFFS) traverse the membrane as a helical segment. Over 264 to 270 (MRRLGSN) the chain is Cytoplasmic. Residues 271-291 (FWLAATVLFSGVFAFLFGLLV) traverse the membrane as a helical segment. At 292–296 (TTKLG) the chain is on the lumenal side. A helical transmembrane segment spans residues 297 to 317 (VPINVLLLSEGLPFLVVTIGF). The Cytoplasmic portion of the chain corresponds to 318 to 366 (EKPIILTRAVLTAAADNRGRAGQASSSTTKSIQDSIQTAIKEQGFEIIR). A helical transmembrane segment spans residues 367–387 (DYCIEIAILIAGAASGVQGGL). Residues 388–389 (RQ) lie on the Lumenal side of the membrane. The chain crosses the membrane as a helical span at residues 390-410 (FCFLAAWILFFDCVLLFTFYT). The Cytoplasmic portion of the chain corresponds to 411 to 476 (TILCIKLEIN…RKLRSSSVRR (66 aa)). A helical transmembrane segment spans residues 477–497 (FKILMVGGFVLVNVVNLSTIP). Residues 498–601 (FRDSSQGAGL…ESLLKSIEDP (104 aa)) are Lumenal-facing. Residues 602-622 (IISKWIIAALTLSIILNGYLF) form a helical membrane-spanning segment. The Cytoplasmic segment spans residues 623-1130 (NAARWSIKEP…ARGLTMSSSE (508 aa)). Glutamate 792 functions as the Charge relay system in the catalytic mechanism. Residue 798–804 (STSRGAK) participates in CoA binding. Residues 859–861 (SRF) and 886–894 (DAMGMNMIS) contribute to the NADP(+) site. Lysine 926 acts as the Charge relay system in catalysis. Residue 955-957 (VLK) coordinates CoA. Aspartate 1002 functions as the Charge relay system in the catalytic mechanism. 1097-1098 (AH) lines the CoA pocket. Catalysis depends on histidine 1098, which acts as the Proton donor. 1102-1103 (NR) is an NADP(+) binding site. A compositionally biased stretch (low complexity) spans 1103-1122 (RSAATTRTSTPVSAAVSAAR). Residues 1103-1130 (RSAATTRTSTPVSAAVSAARGLTMSSSE) are disordered.

It belongs to the HMG-CoA reductase family.

The protein resides in the endoplasmic reticulum membrane. It carries out the reaction (R)-mevalonate + 2 NADP(+) + CoA = (3S)-3-hydroxy-3-methylglutaryl-CoA + 2 NADPH + 2 H(+). The protein operates within metabolic intermediate biosynthesis; (R)-mevalonate biosynthesis; (R)-mevalonate from acetyl-CoA: step 3/3. HMG-CoA reductase; part of the first module of ergosterol biosynthesis pathway that includes the early steps of the pathway, conserved across all eukaryotes, and which results in the formation of mevalonate from acetyl-coenzyme A (acetyl-CoA). Hmg1 and hmg2 catalyze the reduction of hydroxymethylglutaryl-CoA (HMG-CoA) to mevalonate. The first module starts with the action of the cytosolic acetyl-CoA acetyltransferase erg10B that catalyzes the formation of acetoacetyl-CoA. The hydroxymethylglutaryl-CoA synthases erg13A and erg13B then condense acetyl-CoA with acetoacetyl-CoA to form HMG-CoA. The rate-limiting step of the early module is the reduction to mevalonate by the 3-hydroxy-3-methylglutaryl-coenzyme A (HMG-CoA) reductases hmg1 and hmg2. Mevalonate is also a precursor for the extracellular siderophore triacetylfusarinine C (TAFC). The polypeptide is 3-hydroxy-3-methylglutaryl-coenzyme A reductase 1 (Aspergillus fumigatus (strain ATCC MYA-4609 / CBS 101355 / FGSC A1100 / Af293) (Neosartorya fumigata)).